The chain runs to 247 residues: Aliphatic sulfonates import ATP-binding protein SsuB 3 (247 aa).

The 215-residue stretch at 28-242 folds into the ABC transporter domain; that stretch reads VSVRGLQRRY…ALRSILLEEL (215 aa). 60–67 lines the ATP pocket; that stretch reads GESGCGKT.

This sequence belongs to the ABC transporter superfamily. Aliphatic sulfonates importer (TC 3.A.1.17.2) family. As to quaternary structure, the complex is composed of two ATP-binding proteins (SsuB), two transmembrane proteins (SsuC) and a solute-binding protein (SsuA).

The protein resides in the cell inner membrane. The enzyme catalyses ATP + H2O + aliphatic sulfonate-[sulfonate-binding protein]Side 1 = ADP + phosphate + aliphatic sulfonateSide 2 + [sulfonate-binding protein]Side 1.. Part of the ABC transporter complex SsuABC involved in aliphatic sulfonates import. Responsible for energy coupling to the transport system. This chain is Aliphatic sulfonates import ATP-binding protein SsuB 3, found in Paraburkholderia xenovorans (strain LB400).